We begin with the raw amino-acid sequence, 701 residues long: Protein UL29/UL28 (701 aa).

Residues 1–33 (MSGRRKGCSAATASSSSSSPPSRLPPLPGHARR) are disordered.

The protein belongs to the herpesviridae US22 family. In terms of assembly, interacts with UL38 and host HDAC1; these interactions are necessary for the HDAC1 interaction with UL38. Interacts with host MTA2.

The protein localises to the virion. The protein resides in the host nucleus. It localises to the host cytoplasm. In terms of biological role, contributes to activation of immediate-early gene expression. The sequence is that of Protein UL29/UL28 (UL29) from Homo sapiens (Human).